Consider the following 164-residue polypeptide: ATP synthase B' chain, cyanelle (164 aa).

The helical transmembrane segment at 26–46 threads the bilayer; the sequence is ATLPVMMVQLLVLMLILNAVF.

Belongs to the ATPase B chain family. F-type ATPases have 2 components, F(1) - the catalytic core - and F(0) - the membrane proton channel. F(1) has five subunits: alpha(3), beta(3), gamma(1), delta(1), epsilon(1). F(0) has four main subunits: a(1), b(1), b'(1) and c(10-14). The alpha and beta chains form an alternating ring which encloses part of the gamma chain. F(1) is attached to F(0) by a central stalk formed by the gamma and epsilon chains, while a peripheral stalk is formed by the delta, b and b' chains.

The protein localises to the plastid. Its subcellular location is the cyanelle thylakoid membrane. Its function is as follows. F(1)F(0) ATP synthase produces ATP from ADP in the presence of a proton or sodium gradient. F-type ATPases consist of two structural domains, F(1) containing the extramembraneous catalytic core and F(0) containing the membrane proton channel, linked together by a central stalk and a peripheral stalk. During catalysis, ATP synthesis in the catalytic domain of F(1) is coupled via a rotary mechanism of the central stalk subunits to proton translocation. Component of the F(0) channel, it forms part of the peripheral stalk, linking F(1) to F(0). The b'-subunit is a diverged and duplicated form of b found in plants and photosynthetic bacteria. In Cyanophora paradoxa, this protein is ATP synthase B' chain, cyanelle.